We begin with the raw amino-acid sequence, 2325 residues long: Serine/threonine-protein kinase MEC1 (2325 aa).

Residues 1363-1886 (LLTTRSAECD…VWYIFSHARS (524 aa)) enclose the FAT domain. The PI3K/PI4K catalytic domain maps to 1993–2309 (FDDNVNIFFS…QVDVLIQEAT (317 aa)). Residues 1999–2005 (IFFSLQM) form a G-loop region. The catalytic loop stretch occupies residues 2174–2182 (GLGDRHCEN). The activation loop stretch occupies residues 2194–2218 (HIDFDCLFEKGTTLPTPEIVPFRLT). Positions 2293–2325 (LPMNIHGQVDVLIQEATSLERLSQMYAGWAAYM) constitute an FATC domain.

It belongs to the PI3/PI4-kinase family. ATM subfamily.

The protein localises to the nucleus. The catalysed reaction is L-seryl-[protein] + ATP = O-phospho-L-seryl-[protein] + ADP + H(+). It catalyses the reaction L-threonyl-[protein] + ATP = O-phospho-L-threonyl-[protein] + ADP + H(+). In terms of biological role, serine/threonine protein kinase which activates checkpoint signaling upon genotoxic stresses such as ionizing radiation (IR), ultraviolet light (UV), or DNA replication stalling, thereby acting as a DNA damage sensor. Recognizes the substrate consensus sequence [ST]-Q. Recruited to DNA lesions in order to initiate the DNA repair by homologous recombination. Phosphorylates histone H2A to form H2AS128ph (gamma-H2A) at sites of DNA damage, also involved in the regulation of DNA damage response mechanism. Required for cell growth and meiotic recombination. The sequence is that of Serine/threonine-protein kinase MEC1 (MEC1) from Candida albicans (strain SC5314 / ATCC MYA-2876) (Yeast).